Reading from the N-terminus, the 172-residue chain is Mesogenin-1 (172 aa).

Residues 1-69 (METLHHPLVK…SPYSSSSHTQ (69 aa)) form a disordered region. The segment covering 18–29 (SSDSEPNSSCMA) has biased composition (polar residues). Low complexity predominate over residues 42–66 (SLSQTPSPQSLSPAVSYESPYSSSS). In terms of domain architecture, bHLH spans 108-162 (QRRRKASEREKLRMRAIAEALHTLRNNLPPMYSQGRQPLTKIQTLKCTINYISEL).

It localises to the nucleus. Functionally, involved in specifying the paraxial, but not dorsal, mesoderm. May regulate the expression of T-box transcription factors required for mesoderm formation and differentiation, such as brachyury T, wnt8, vegt and eomes. The protein is Mesogenin-1 (msgn1) of Xenopus tropicalis (Western clawed frog).